A 369-amino-acid polypeptide reads, in one-letter code: Phosphate-binding protein PstS 3 (369 aa).

The N-terminal stretch at 1–21 (MKLNQFGAAIGLLATGALLSG) is a signal peptide. C22 carries N-palmitoyl cysteine lipidation. A lipid anchor (S-diacylglycerol cysteine) is attached at C22. Phosphate is bound by residues 55–57 (STA), S85, D103, and 190–192 (SGT).

Belongs to the PstS family. As to quaternary structure, the complex is composed of two ATP-binding proteins (PstB), two transmembrane proteins (PstC and PstA) and a solute-binding protein (PstS).

The protein resides in the cell membrane. In terms of biological role, part of the ABC transporter complex PstSACB involved in phosphate import. The polypeptide is Phosphate-binding protein PstS 3 (pstS2) (Mycobacterium leprae (strain TN)).